Consider the following 200-residue polypeptide: Recombination protein RecR (200 aa).

A C4-type zinc finger spans residues 57–72 (CRQCRTLTEEELCPQC). One can recognise a Toprim domain in the interval 80–175 (TLLCVVEGPM…ITSRIAHGVP (96 aa)).

This sequence belongs to the RecR family.

Functionally, may play a role in DNA repair. It seems to be involved in an RecBC-independent recombinational process of DNA repair. It may act with RecF and RecO. The polypeptide is Recombination protein RecR (Pseudomonas fluorescens (strain SBW25)).